The chain runs to 332 residues: L-lactate dehydrogenase A chain (332 aa).

NAD(+) is bound by residues 29–57 (GAVGMACAISILMKDLADELALVDVVEDK) and Arg99. Arg106, Asn138, and Arg169 together coordinate substrate. NAD(+) is bound at residue Asn138. The Proton acceptor role is filled by His193. Thr248 contacts substrate.

It belongs to the LDH/MDH superfamily. LDH family. As to quaternary structure, homotetramer.

It localises to the cytoplasm. The enzyme catalyses (S)-lactate + NAD(+) = pyruvate + NADH + H(+). It functions in the pathway fermentation; pyruvate fermentation to lactate; (S)-lactate from pyruvate: step 1/1. Interconverts simultaneously and stereospecifically pyruvate and lactate with concomitant interconversion of NADH and NAD(+). The polypeptide is L-lactate dehydrogenase A chain (LDHA) (Alligator mississippiensis (American alligator)).